We begin with the raw amino-acid sequence, 370 residues long: MAITLEEAPWLGWLLVKALMRFAFMVVNNLVAIPSYICYVIILQPLRVLDSKRFWYIEGIMYKWLLGMVASWGWYAGYTVMEWGEDIKAVSKDEAVMLVNHQATGDVCTLMMCLQDKGLVVAQMMWLMDHIFKYTNFGIVSLVHGDFFIRQGRSYRDQQLLLLKKHLENNYRSRDRKWIVLFPEGGFLRKRRETSQAFAKKNNLPFLTNVTLPRSGATKIILNALVAQQKNGSPAGGDAKELDSKSKGLQWIIDTTIAYPKAEPIDIQTWILGYRKPTVTHVHYRIFPIKDVPLETDDLTTWLYQRFVEKEDLLSHFYETGAFPPSKGHKEAVSREMTLSNLWIFLIQSFAFLSGYMWYNIIQYFYHCLF.

A helical membrane pass occupies residues 22-42 (FAFMVVNNLVAIPSYICYVII). Residues 101–106 (HQATGD) carry the HXXXXD motif motif. The helical transmembrane segment at 342 to 362 (LWIFLIQSFAFLSGYMWYNII) threads the bilayer.

Belongs to the 1-acyl-sn-glycerol-3-phosphate acyltransferase family. In terms of tissue distribution, highly expressed in liver and placenta. Also expressed in peripheral blood, lung, kidney and brain. Detected at lower levels in colon. High expression is detected in brain and testis.

Its subcellular location is the endoplasmic reticulum membrane. It catalyses the reaction a 2-acyl-sn-glycero-3-phosphoethanolamine + octadecanoyl-CoA = 1-octadecanoyl-2-acyl-sn-glycero-3-phosphoethanolamine + CoA. It carries out the reaction 2-(9Z-octadecenoyl)-sn-glycero-3-phosphoethanolamine + octadecanoyl-CoA = 1-octadecanoyl-2-(9Z-octadecenoyl)-sn-glycero-3-phosphoethanolamine + CoA. The catalysed reaction is a 2-acyl-sn-glycero-3-phosphoethanolamine + hexadecanoyl-CoA = 1-hexadecanoyl-2-acyl-sn-glycero-3-phosphoethanolamine + CoA. The enzyme catalyses 2-(9Z-octadecenoyl)-sn-glycero-3-phosphoethanolamine + hexadecanoyl-CoA = 1-hexadecanoyl-2-(9Z-octadecenoyl)-sn-glycero-3-phosphoethanolamine + CoA. It catalyses the reaction 1-tetradecanoyl-sn-glycero-3-phospho-(1'-sn-glycerol) + hexadecanoyl-CoA = 1-tetradecanoyl-2-hexadecanoyl-sn-glycero-3-phospho-(1'-sn-glycerol) + CoA. It carries out the reaction 1-hexadecanoyl-sn-glycero-3-phospho-(1'-sn-glycerol) + dodecanoyl-CoA = 1-hexadecanoyl-2-dodecanoyl-sn-glycero-3-phospho-(1'-sn-glycerol) + CoA. The catalysed reaction is 1-hexadecanoyl-sn-glycero-3-phospho-(1'-sn-glycerol) + hexadecanoyl-CoA = 1,2-dihexadecanoyl-sn-glycero-3-phospho-(1'-sn-glycerol) + CoA. The enzyme catalyses 1-hexadecanoyl-sn-glycero-3-phospho-(1'-sn-glycerol) + octadecanoyl-CoA = 1-hexadecanoyl-2-octadecanoyl-sn-glycero-3-phospho-(1'-sn-glycerol) + CoA. It catalyses the reaction 1-octadecanoyl-sn-glycero-3-phospho-(1'-sn-glycerol) + hexadecanoyl-CoA = 1-octadecanoyl-2-hexadecanoyl-sn-glycero-3-phospho-(1'-sn-glycerol) + CoA. It carries out the reaction 1-(9Z-octadecenoyl)-sn-glycero-3-phospho-(1'-sn-glycerol) + dodecanoyl-CoA = 1-(9Z-octadecenoyl)-2-dodecanoyl-sn-glycero-3-phospho-(1'-sn-glycerol) + CoA. The catalysed reaction is 1-hexadecanoyl-sn-glycero-3-phospho-(1'-sn-glycerol) + (9Z)-octadecenoyl-CoA = 1-hexadecanoyl-2-(9Z-octadecenoyl)-sn-glycero-3-phospho-(1'-sn-glycerol) + CoA. The enzyme catalyses 1-(9Z-octadecenoyl)-sn-glycero-3-phospho-(1'-sn-glycerol) + hexadecanoyl-CoA = 1-(9Z-octadecenoyl)-2-hexadecanoyl-sn-glycero-3-phospho-(1'-sn-glycerol) + CoA. It catalyses the reaction 1-(9Z-octadecenoyl)-sn-glycero-3-phospho-(1'-sn-glycerol) + (9Z)-octadecenoyl-CoA = 1,2-di-(9Z-octadecenoyl)-sn-glycero-3-phospho-(1'-sn-glycerol) + CoA. It carries out the reaction a 2-acylglycerol + an acyl-CoA = a 1,2-diacylglycerol + CoA. The catalysed reaction is a 2-acylglycerol + hexadecanoyl-CoA = a 1-hexadecanoyl-2-acylglycerol + CoA. The enzyme catalyses a 1-acylglycerol + hexadecanoyl-CoA = an hexadecanoyl-acylglycerol + CoA. It catalyses the reaction a 2-acyl-sn-glycero-3-phosphocholine + an acyl-CoA = a 1,2-diacyl-sn-glycero-3-phosphocholine + CoA. It carries out the reaction 2-(9Z-octadecenoyl)-sn-glycero-3-phosphocholine + octadecanoyl-CoA = 1-octadecanoyl-2-(9Z-octadecenoyl)-sn-glycero-3-phosphocholine + CoA. The catalysed reaction is 2-(9Z,12Z-octadecadienoyl)-sn-glycero-3-phosphocholine + octadecanoyl-CoA = 1-octadecanoyl-2-(9Z,12Z)-octadecadienoyl-sn-glycero-3-phosphocholine + CoA. The enzyme catalyses 2-(5Z,8Z,11Z,14Z)-eicosatetraenoyl-sn-glycero-3-phosphocholine + octadecanoyl-CoA = 1-octadecanoyl-2-(5Z,8Z,11Z,14Z-eicosatetraenoyl)-sn-glycero-3-phosphocholine + CoA. It catalyses the reaction 2-(9Z-octadecenoyl)-sn-glycero-3-phosphocholine + hexadecanoyl-CoA = 1-hexadecanoyl-2-(9Z-octadecenoyl)-sn-glycero-3-phosphocholine + CoA. It carries out the reaction 2-(9Z-octadecenoyl)-sn-glycero-3-phospho-L-serine + hexadecanoyl-CoA = 1-hexadecanoyl-2-(9Z-octadecenoyl)-sn-glycero-3-phospho-L-serine + CoA. The catalysed reaction is 2-(4Z,7Z,10Z,13Z,16Z,19Z-docosahexaenoyl)-sn-glycero-3-phosphocholine + octadecanoyl-CoA = 1-octadecanoyl-2-(4Z,7Z,10Z,13Z,16Z,19Z-docosahexaenoyl)-sn-glycero-3-phosphocholine + CoA. The enzyme catalyses 1-(9Z-octadecenoyl)-sn-glycero-3-phospho-L-serine + octadecanoyl-CoA = 1-(9Z-octadecenoyl)-2-octadecanoyl-sn-glycero-3-phospho-L-serine + CoA. It catalyses the reaction a 2-acyl-sn-glycero-3-phosphoethanolamine + a fatty acyl-CoA = a 1,2-diacyl-sn-glycero-3-phosphoethanolamine + CoA. Lysophospholipid acyltransferase involved in fatty acyl chain remodeling of glycerophospholipids in the endoplasmic reticulum membrane. Selectively catalyzes the transfer and esterification of saturated long-chain fatty acids from acyl-CoA to the sn-1 position of 1-lyso-2-acyl phosphatidylethanolamines (1-lyso-PE, LPE), with a preference for stearoyl CoA over palmitoyl CoA as acyl donor. Acts in concert with an unknown phospholipase A1 to convert palmitate phosphatidylethanolamine (PE) species into stearate ones. Provides substrates to the PE methylation pathway, controlling stearate/palmitate composition of PE and phosphatidylcholine (PC) species with an overall impact on de novo hepatic lipid synthesis, body fat content and life span. Can acylate lysophosphatidylglycerols (LPG) using various saturated fatty acyl-CoAs as acyl donors. Can also acylate monoacylglycerols with a preference for 2-monoacylglycerols over 1-monoacylglycerols. Has no activity toward lysophosphatidic acids (LPA). The chain is Acyl-CoA:lysophosphatidylglycerol acyltransferase 1 from Homo sapiens (Human).